Here is a 575-residue protein sequence, read N- to C-terminus: MDPFHACSILKQLKTMYDEGQLTDIVVEVDHGKTFSCHRNVLAAISPYFRSMFTSGLTESTQKEVRIIGVEAESMGLVLNYAYTSRVILTEANVQALFTTASIFQIPSIQDQCAKYMISHLDPQNSIGVFIFADHYGHQELGDRSKEYIRKKFLCVTKEQEFLQLTKDQLISILDSDDLNVDREEHVYESIIRWFEHEQNEREVHLPEIFAKCIRFPLMEDAFIEKIPPRFAQAIVKSCGEKGPSNTNGCTQRLGMTASEMIICFDAAHKHSGKKQTVPCLDIVTGRVFKLCKPPNDLREVGILVSPDNDIYIAGGYRPSSSEVSIDHKAENDFWMYDHSTNRWLSKPSLLRARIGCKLVYCCGKMYAIGGRVYEGDGRNSLKSVECYDSRENCWMTVCAMPVAMEFHNAVEHKEKIYVLQGEFFLFYEPQKDYWGFLTPMTVPRIQGLAAVYKDSIYYIAGTCGNHQRVFTVEAYDIELNKWTRKKDFPCDQSINPYLKLVLFQNKLHLFVRATQVTVEEHIFRTSRKNSLYQYDDIADQWMKVYETPDRLWDLGRHFECAVAKLYPQCLQKVL.

The BTB domain occupies 23–91 (TDIVVEVDHG…AYTSRVILTE (69 aa)). In terms of domain architecture, BACK spans 126 to 228 (SIGVFIFADH…MEDAFIEKIP (103 aa)). Kelch repeat units follow at residues 310-364 (DIYI…YCCG), 365-415 (KMYA…EHKE), 417-455 (IYVL…VYKD), 457-506 (IYYI…LFQN), and 516-562 (QVTV…FECA).

It belongs to the KBTBD8 family. As to quaternary structure, component of the BCR(KBTBD8) E3 ubiquitin ligase complex, at least composed of CUL3, KBTBD8 and RBX1.

The protein resides in the cytoplasm. Its subcellular location is the cytoskeleton. It is found in the spindle. It localises to the golgi apparatus. In terms of biological role, substrate-specific adapter of a BCR (BTB-CUL3-RBX1) E3 ubiquitin ligase complex that acts as a regulator of neural crest specification. The BCR(KBTBD8) complex acts by mediating monoubiquitination of NOLC1 and TCOF1: monoubiquitination promotes the formation of a NOLC1-TCOF1 complex that acts as a platform to connect RNA polymerase I with enzymes responsible for ribosomal processing and modification, leading to remodel the translational program of differentiating cells in favor of neural crest specification. The polypeptide is Kelch repeat and BTB domain-containing protein 8 (Rattus norvegicus (Rat)).